The primary structure comprises 440 residues: Argininosuccinate lyase (440 aa).

It belongs to the lyase 1 family. Argininosuccinate lyase subfamily.

It is found in the cytoplasm. It catalyses the reaction 2-(N(omega)-L-arginino)succinate = fumarate + L-arginine. The protein operates within amino-acid biosynthesis; L-arginine biosynthesis; L-arginine from L-ornithine and carbamoyl phosphate: step 3/3. This Clostridium botulinum (strain Okra / Type B1) protein is Argininosuccinate lyase.